A 353-amino-acid chain; its full sequence is Photosystem II protein D1 (353 aa).

Residue Thr-2 is modified to N-acetylthreonine. Residue Thr-2 is modified to Phosphothreonine. The next 3 membrane-spanning stretches (helical) occupy residues 29–46, 118–133, and 142–156; these read YIGW…TATS, HFLL…EWEL, and WIAV…AATA. His-118 lines the chlorophyll a pocket. Tyr-126 lines the pheophytin a pocket. [CaMn4O5] cluster-binding residues include Asp-170 and Glu-189. A helical membrane pass occupies residues 197-218; the sequence is FHMLGVAGVFGGSLFSAMHGSL. Residue His-198 participates in chlorophyll a binding. A quinone-binding positions include His-215 and 264-265; that span reads SF. His-215 contributes to the Fe cation binding site. Residue His-272 coordinates Fe cation. The chain crosses the membrane as a helical span at residues 274–288; that stretch reads FLAAWPVVGIWFTAL. [CaMn4O5] cluster-binding residues include His-332, Glu-333, Asp-342, and Ala-344. A propeptide spanning residues 345–353 is cleaved from the precursor; it reads GVEVPSTNG.

Belongs to the reaction center PufL/M/PsbA/D family. PSII is composed of 1 copy each of membrane proteins PsbA, PsbB, PsbC, PsbD, PsbE, PsbF, PsbH, PsbI, PsbJ, PsbK, PsbL, PsbM, PsbT, PsbX, PsbY, PsbZ, Psb30/Ycf12, at least 3 peripheral proteins of the oxygen-evolving complex and a large number of cofactors. It forms dimeric complexes. Requires The D1/D2 heterodimer binds P680, chlorophylls that are the primary electron donor of PSII, and subsequent electron acceptors. It shares a non-heme iron and each subunit binds pheophytin, quinone, additional chlorophylls, carotenoids and lipids. D1 provides most of the ligands for the Mn4-Ca-O5 cluster of the oxygen-evolving complex (OEC). There is also a Cl(-1) ion associated with D1 and D2, which is required for oxygen evolution. The PSII complex binds additional chlorophylls, carotenoids and specific lipids. as cofactor. Post-translationally, tyr-161 forms a radical intermediate that is referred to as redox-active TyrZ, YZ or Y-Z. In terms of processing, C-terminally processed by CTPA; processing is essential to allow assembly of the oxygen-evolving complex and thus photosynthetic growth.

The protein localises to the plastid. The protein resides in the chloroplast thylakoid membrane. The enzyme catalyses 2 a plastoquinone + 4 hnu + 2 H2O = 2 a plastoquinol + O2. Photosystem II (PSII) is a light-driven water:plastoquinone oxidoreductase that uses light energy to abstract electrons from H(2)O, generating O(2) and a proton gradient subsequently used for ATP formation. It consists of a core antenna complex that captures photons, and an electron transfer chain that converts photonic excitation into a charge separation. The D1/D2 (PsbA/PsbD) reaction center heterodimer binds P680, the primary electron donor of PSII as well as several subsequent electron acceptors. The protein is Photosystem II protein D1 of Morus indica (Mulberry).